Reading from the N-terminus, the 691-residue chain is Elongation factor G (691 aa).

The tr-type G domain occupies 8–282; it reads ERVRNIGIAA…AVVNYLPAPV (275 aa). GTP is bound by residues 17 to 24, 81 to 85, and 135 to 138; these read AHIDAGKT, DTPGH, and NKMD.

Belongs to the TRAFAC class translation factor GTPase superfamily. Classic translation factor GTPase family. EF-G/EF-2 subfamily.

The protein resides in the cytoplasm. Its function is as follows. Catalyzes the GTP-dependent ribosomal translocation step during translation elongation. During this step, the ribosome changes from the pre-translocational (PRE) to the post-translocational (POST) state as the newly formed A-site-bound peptidyl-tRNA and P-site-bound deacylated tRNA move to the P and E sites, respectively. Catalyzes the coordinated movement of the two tRNA molecules, the mRNA and conformational changes in the ribosome. This is Elongation factor G from Prochlorococcus marinus (strain NATL2A).